Here is a 170-residue protein sequence, read N- to C-terminus: Peptide deformylase (170 aa).

Fe cation is bound by residues Cys-88 and His-130. The active site involves Glu-131. Residue His-134 coordinates Fe cation.

It belongs to the polypeptide deformylase family. The cofactor is Fe(2+).

It catalyses the reaction N-terminal N-formyl-L-methionyl-[peptide] + H2O = N-terminal L-methionyl-[peptide] + formate. Its function is as follows. Removes the formyl group from the N-terminal Met of newly synthesized proteins. Requires at least a dipeptide for an efficient rate of reaction. N-terminal L-methionine is a prerequisite for activity but the enzyme has broad specificity at other positions. This is Peptide deformylase from Acetivibrio thermocellus (strain ATCC 27405 / DSM 1237 / JCM 9322 / NBRC 103400 / NCIMB 10682 / NRRL B-4536 / VPI 7372) (Clostridium thermocellum).